The primary structure comprises 126 residues: Probable prefoldin subunit 6 (126 aa).

Belongs to the prefoldin subunit beta family. Heterohexamer of two PFD-alpha type and four PFD-beta type subunits. In terms of tissue distribution, expressed in embryonic blastomeres and gonads.

It is found in the cytoplasm. Binds specifically to cytosolic chaperonin (c-CPN) and transfers target proteins to it. Binds to nascent polypeptide chain and promotes folding in an environment in which there are many competing pathways for nonnative proteins. Required for positioning of the mitotic spindle. The polypeptide is Probable prefoldin subunit 6 (pfd-6) (Caenorhabditis elegans).